The chain runs to 127 residues: MASPKSSTRPNQENQEPQFQDFFPTMAGKLGGEGLIEEICKGFELLMDKDKGVITFESLRRNASTVLGLGDLTDDDVRYMINEGDFDRDGALNQMEFCVLMFRLSPELMEASRCVVTEVIEEEFYRH.

Over residues 1–18 the composition is skewed to polar residues; that stretch reads MASPKSSTRPNQENQEPQ. Residues 1-20 form a disordered region; sequence MASPKSSTRPNQENQEPQFQ. An EF-hand domain is found at 72 to 107; the sequence is LTDDDVRYMINEGDFDRDGALNQMEFCVLMFRLSPE. Ca(2+) contacts are provided by D85, D87, D89, and E96.

In terms of assembly, interacts with PID.

Functionally, potential calcium sensor that binds calcium in vitro. In Arabidopsis thaliana (Mouse-ear cress), this protein is Calcium-binding protein PBP1 (PBP1).